A 55-amino-acid polypeptide reads, in one-letter code: Large ribosomal subunit protein bL33 (55 aa).

Belongs to the bacterial ribosomal protein bL33 family.

In Hamiltonella defensa subsp. Acyrthosiphon pisum (strain 5AT), this protein is Large ribosomal subunit protein bL33.